The following is a 270-amino-acid chain: BPI fold-containing family A member 5 (270 aa).

A signal peptide spans 1 to 19 (MFLAGSFIVLCGLLAQSTA). A disulfide bond links Cys196 and Cys238.

This sequence belongs to the BPI/LBP/Plunc superfamily. Plunc family. In terms of tissue distribution, expressed in interpapillar epithelium of the anterior part of the tongue.

The protein localises to the secreted. Functionally, may play a role in innate immunity in the oral cavity. The chain is BPI fold-containing family A member 5 (Bpifa5) from Mus musculus (Mouse).